The following is a 230-amino-acid chain: ATP synthase subunit a (230 aa).

Transmembrane regions (helical) follow at residues 16–36 (LVLF…WLSI), 73–93 (WVSA…LGLL), 106–126 (TYSI…YLAF), 142–162 (LIPF…IALG), 165–185 (LAAN…AIWT), and 192–212 (IASI…GVAC).

Belongs to the ATPase A chain family. F-type ATPases have 2 components, CF(1) - the catalytic core - and CF(0) - the membrane proton channel. CF(1) has five subunits: alpha(3), beta(3), gamma(1), delta(1), epsilon(1). CF(0) has three main subunits: a, b and c.

The protein localises to the mitochondrion inner membrane. In terms of biological role, mitochondrial membrane ATP synthase (F(1)F(0) ATP synthase or Complex V) produces ATP from ADP in the presence of a proton gradient across the membrane which is generated by electron transport complexes of the respiratory chain. F-type ATPases consist of two structural domains, F(1) - containing the extramembraneous catalytic core and F(0) - containing the membrane proton channel, linked together by a central stalk and a peripheral stalk. During catalysis, ATP synthesis in the catalytic domain of F(1) is coupled via a rotary mechanism of the central stalk subunits to proton translocation. Key component of the proton channel; it may play a direct role in the translocation of protons across the membrane. This is ATP synthase subunit a (ATP6) from Patiria pectinifera (Starfish).